We begin with the raw amino-acid sequence, 264 residues long: 3-methyl-2-oxobutanoate hydroxymethyltransferase (264 aa).

Positions 41 and 80 each coordinate Mg(2+). 3-methyl-2-oxobutanoate-binding positions include 41–42 (DS), Asp-80, and Lys-109. Glu-111 is a binding site for Mg(2+). The active-site Proton acceptor is the Glu-178.

Belongs to the PanB family. Homodecamer; pentamer of dimers. The cofactor is Mg(2+).

The protein resides in the cytoplasm. It carries out the reaction 3-methyl-2-oxobutanoate + (6R)-5,10-methylene-5,6,7,8-tetrahydrofolate + H2O = 2-dehydropantoate + (6S)-5,6,7,8-tetrahydrofolate. It participates in cofactor biosynthesis; (R)-pantothenate biosynthesis; (R)-pantoate from 3-methyl-2-oxobutanoate: step 1/2. In terms of biological role, catalyzes the reversible reaction in which hydroxymethyl group from 5,10-methylenetetrahydrofolate is transferred onto alpha-ketoisovalerate to form ketopantoate. This chain is 3-methyl-2-oxobutanoate hydroxymethyltransferase, found in Thermosipho melanesiensis (strain DSM 12029 / CIP 104789 / BI429).